A 264-amino-acid chain; its full sequence is Thymidylate synthase (264 aa).

R21 is a binding site for dUMP. A (6R)-5,10-methylene-5,6,7,8-tetrahydrofolate-binding site is contributed by H51. Residue 126–127 participates in dUMP binding; it reads RR. C146 acts as the Nucleophile in catalysis. DUMP contacts are provided by residues 166–169, N177, and 207–209; these read RSAD and HLY. Residue D169 coordinates (6R)-5,10-methylene-5,6,7,8-tetrahydrofolate. (6R)-5,10-methylene-5,6,7,8-tetrahydrofolate is bound at residue A263.

Belongs to the thymidylate synthase family. Bacterial-type ThyA subfamily. As to quaternary structure, homodimer.

The protein localises to the cytoplasm. The catalysed reaction is dUMP + (6R)-5,10-methylene-5,6,7,8-tetrahydrofolate = 7,8-dihydrofolate + dTMP. It functions in the pathway pyrimidine metabolism; dTTP biosynthesis. In terms of biological role, catalyzes the reductive methylation of 2'-deoxyuridine-5'-monophosphate (dUMP) to 2'-deoxythymidine-5'-monophosphate (dTMP) while utilizing 5,10-methylenetetrahydrofolate (mTHF) as the methyl donor and reductant in the reaction, yielding dihydrofolate (DHF) as a by-product. This enzymatic reaction provides an intracellular de novo source of dTMP, an essential precursor for DNA biosynthesis. In Allorhizobium ampelinum (strain ATCC BAA-846 / DSM 112012 / S4) (Agrobacterium vitis (strain S4)), this protein is Thymidylate synthase.